A 126-amino-acid chain; its full sequence is Allergen Tha p 1 (126 aa).

Positions 1–18 (MKLLILALTCAAAVWARP) are cleaved as a signal peptide.

Belongs to the insect A10/OS-D protein family.

The protein localises to the secreted. The polypeptide is Allergen Tha p 1 (Thaumetopoea pityocampa (Pine processionary moth)).